The chain runs to 366 residues: MGNYRIAVLPGDGIGKEVTSGAVEVLKAVGIRFGHEFTFEYGLIGGAAIDEAGTPLPEETVRLCRESDAVLLGAVGGPKWDDNPPHLRPEKGLLAIRKQLDLYANLRPVVCYDSLVSRSPLKPDLVQGVDFVIVRELTGGIYFGQPSAVVENGEEKAVDTLLYKKEEIERIVRMAFELARGRRKKVTSVDKANVLSSSRLWREVAEEVANEFPDVTLEHMLVDMRMQLIRAPKQFDVIVTENMFGDILSDEASMLSGSLGMLPSASLSASGPSLYEPVHGSAPDIAGMNKANPIAAILSAAMMLRLSFGLTAEAGGRARVWQALALGSGSRLGQRRPHLSTNEMVEEIKAAVLDYTAIAQIMTVYA.

77–90 (GPKWDDNPPHLRPE) serves as a coordination point for NAD(+). Substrate contacts are provided by Arg-97, Arg-107, Arg-135, and Asp-223. Mg(2+) contacts are provided by Asp-223, Asp-246, and Asp-250. 280-292 (GSAPDIAGMNKAN) contributes to the NAD(+) binding site.

It belongs to the isocitrate and isopropylmalate dehydrogenases family. LeuB type 1 subfamily. Homodimer. The cofactor is Mg(2+). Requires Mn(2+) as cofactor.

The protein resides in the cytoplasm. The enzyme catalyses (2R,3S)-3-isopropylmalate + NAD(+) = 4-methyl-2-oxopentanoate + CO2 + NADH. It participates in amino-acid biosynthesis; L-leucine biosynthesis; L-leucine from 3-methyl-2-oxobutanoate: step 3/4. Functionally, catalyzes the oxidation of 3-carboxy-2-hydroxy-4-methylpentanoate (3-isopropylmalate) to 3-carboxy-4-methyl-2-oxopentanoate. The product decarboxylates to 4-methyl-2 oxopentanoate. The sequence is that of 3-isopropylmalate dehydrogenase (leuB) from Bacillus caldotenax.